We begin with the raw amino-acid sequence, 136 residues long: Histone H3.3C (136 aa).

The disordered stretch occupies residues 1–44; it reads MARTKQTARKSTGGKAPRKQLVTKAARKSAPSTGGMKKPHRYRP. Arg3 is subject to Asymmetric dimethylarginine; by PRMT6; alternate. Position 3 is a citrulline; alternate (Arg3). Residue Thr4 is modified to Phosphothreonine; by HASPIN. Lys5 bears the Allysine; alternate mark. An N6,N6,N6-trimethyllysine; alternate modification is found at Lys5. The residue at position 5 (Lys5) is an N6,N6-dimethyllysine; alternate. The residue at position 5 (Lys5) is an N6-(2-hydroxyisobutyryl)lysine; alternate. Lys5 carries the N6-(beta-hydroxybutyryl)lysine; alternate modification. Residue Lys5 is modified to N6-acetyllysine; alternate. Lys5 is modified (N6-methyllysine; alternate). Gln6 carries the post-translational modification 5-glutamyl dopamine; alternate. The residue at position 6 (Gln6) is a 5-glutamyl serotonin; alternate. Thr7 carries the phosphothreonine; by PKC modification. Symmetric dimethylarginine is present on Arg9. Residue Lys10 is modified to N6,N6,N6-trimethyllysine; alternate. Lys10 carries the N6,N6-dimethyllysine; alternate modification. An N6-(2-hydroxyisobutyryl)lysine; alternate modification is found at Lys10. An N6-(beta-hydroxybutyryl)lysine; alternate modification is found at Lys10. Lys10 is subject to N6-acetyllysine; alternate. Lys10 bears the N6-methyllysine; alternate mark. Lys10 is subject to N6-lactoyllysine; alternate. Residue Ser11 is modified to ADP-ribosylserine; alternate. Ser11 is subject to Phosphoserine; alternate; by AURKB, AURKC, RPS6KA3, RPS6KA4 and RPS6KA5. Thr12 is modified (phosphothreonine; by PKC). The residue at position 15 (Lys15) is an N6-(2-hydroxyisobutyryl)lysine; alternate. N6-(beta-hydroxybutyryl)lysine; alternate is present on Lys15. Lys15 carries the post-translational modification N6-acetyllysine; alternate. Lys15 is modified (N6-lactoyllysine; alternate). Lys15 is subject to N6-glutaryllysine; alternate. N6-succinyllysine; alternate is present on Lys15. Position 18 is an asymmetric dimethylarginine (Arg18). N6-(2-hydroxyisobutyryl)lysine; alternate is present on residues Lys19 and Lys24. Lys19 and Lys24 each carry N6-(beta-hydroxybutyryl)lysine; alternate. Lys19 and Lys24 each carry N6-acetyllysine; alternate. An N6-methyllysine; alternate mark is found at Lys19 and Lys24. 2 positions are modified to N6-lactoyllysine; alternate: Lys19 and Lys24. Residues Lys19 and Lys24 each carry the N6-glutaryllysine; alternate modification. 2 positions are modified to N6-butyryllysine; alternate: Lys19 and Lys24. Arg27 carries the citrulline modification. Lys28 is modified (N6,N6,N6-trimethyllysine; alternate). At Lys28 the chain carries N6,N6-dimethyllysine; alternate. Lys28 carries the N6-(2-hydroxyisobutyryl)lysine; alternate modification. Lys28 is modified (N6-acetyllysine; alternate). N6-methyllysine; alternate is present on Lys28. Residue Lys28 is modified to N6-lactoyllysine; alternate. Lys28 carries the post-translational modification N6-glutaryllysine; alternate. An ADP-ribosylserine; alternate modification is found at Ser29. Ser29 carries the phosphoserine; alternate; by AURKB, AURKC and RPS6KA5 modification. Ser32 bears the Phosphoserine mark. The residue at position 37 (Lys37) is an N6,N6,N6-trimethyllysine; alternate. Position 37 is an N6,N6-dimethyllysine; alternate (Lys37). The residue at position 37 (Lys37) is an N6-(2-hydroxyisobutyryl)lysine; alternate. At Lys37 the chain carries N6-acetyllysine; alternate. Lys37 carries the N6-methyllysine; alternate modification. Lys38 bears the N6-methyllysine mark. Tyr42 carries the post-translational modification Phosphotyrosine. Lys57 carries the N6,N6,N6-trimethyllysine; alternate modification. Lys57 is modified (N6-(2-hydroxyisobutyryl)lysine; alternate). The residue at position 57 (Lys57) is an N6-(beta-hydroxybutyryl)lysine; alternate. Residue Lys57 is modified to N6-acetyllysine; alternate. An N6-methyllysine; alternate modification is found at Lys57. An N6-lactoyllysine; alternate modification is found at Lys57. N6-glutaryllysine; alternate is present on Lys57. An N6-succinyllysine; alternate modification is found at Lys57. Ser58 bears the Phosphoserine mark. Lys65 and Lys80 each carry N6-(2-hydroxyisobutyryl)lysine; alternate. Residues Lys65 and Lys80 each carry the N6-methyllysine; alternate modification. Position 80 is an N6,N6,N6-trimethyllysine; alternate (Lys80). An N6,N6-dimethyllysine; alternate modification is found at Lys80. Position 80 is an N6-acetyllysine; alternate (Lys80). Lys80 carries the N6-lactoyllysine; alternate modification. N6-glutaryllysine; alternate is present on Lys80. Lys80 bears the N6-succinyllysine; alternate mark. Position 81 is a phosphothreonine (Thr81). Ser87 bears the Phosphoserine mark. Residue Thr108 is modified to Phosphothreonine. An N6-acetyllysine; alternate modification is found at Lys116. Residue Lys116 is modified to N6-glutaryllysine; alternate.

This sequence belongs to the histone H3 family. As to quaternary structure, the nucleosome is a histone octamer containing two molecules each of H2A, H2B, H3 and H4 assembled in one H3-H4 heterotetramer and two H2A-H2B heterodimers. The octamer wraps approximately 147 bp of DNA. In terms of processing, acetylation is generally linked to gene activation. Acetylation on Lys-19 (H3K18ac) favors methylation at Arg-18 (H3R17me). Citrullination at Arg-18 by PADI4 impairs methylation and represses transcription. Post-translationally, asymmetric dimethylation at Arg-18 (H3R17me2a) by CARM1 is linked to gene activation. Asymmetric dimethylation at Arg-3 (H3R2me2a) by PRMT6 is linked to gene repression and is mutually exclusive with H3 Lys-5 methylation (H3K4me2 and H3K4me3). H3R2me2a is present at the 3' of genes regardless of their transcription state and is enriched on inactive promoters, while it is absent on active promoters. In terms of processing, methylation at Lys-5 (H3K4me) and Lys-80 (H3K79me) are linked to gene activation. Methylation at Lys-5 (H3K4me) facilitates subsequent acetylation of H3 and H4. Methylation at Lys-80 (H3K79me) is associated with DNA double-strand break (DSB) responses and is a specific target for TP53BP1. Methylation at Lys-10 (H3K9me) and Lys-28 (H3K27me) are linked to gene repression. Methylation at Lys-10 (H3K9me) is a specific target for HP1 proteins (CBX1, CBX3 and CBX5) and prevents subsequent phosphorylation at Ser-11 (H3S10ph) and acetylation of H3 and H4. Methylation at Lys-5 (H3K4me) and Lys-80 (H3K79me) require preliminary monoubiquitination of H2B at 'Lys-120'. Methylation at Lys-10 (H3K9me) and Lys-28 (H3K27me) are enriched in inactive X chromosome chromatin. Monomethylation at Lys-57 (H3K56me1) by EHMT2/G9A in G1 phase promotes interaction with PCNA and is required for DNA replication. Phosphorylated at Thr-4 (H3T3ph) by HASPIN during prophase and dephosphorylated during anaphase. Phosphorylation at Ser-11 (H3S10ph) by AURKB is crucial for chromosome condensation and cell-cycle progression during mitosis and meiosis. In addition phosphorylation at Ser-11 (H3S10ph) by RPS6KA4 and RPS6KA5 is important during interphase because it enables the transcription of genes following external stimulation, like mitogens, stress, growth factors or UV irradiation and result in the activation of genes, such as c-fos and c-jun. Phosphorylation at Ser-11 (H3S10ph), which is linked to gene activation, prevents methylation at Lys-10 (H3K9me) but facilitates acetylation of H3 and H4. Phosphorylation at Ser-11 (H3S10ph) by AURKB mediates the dissociation of HP1 proteins (CBX1, CBX3 and CBX5) from heterochromatin. Phosphorylation at Ser-11 (H3S10ph) is also an essential regulatory mechanism for neoplastic cell transformation. Phosphorylated at Ser-29 (H3S28ph) by MAP3K20 isoform 1, RPS6KA5 or AURKB during mitosis or upon ultraviolet B irradiation. Phosphorylation at Thr-7 (H3T6ph) by PRKCB is a specific tag for epigenetic transcriptional activation that prevents demethylation of Lys-5 (H3K4me) by LSD1/KDM1A. At centromeres, specifically phosphorylated at Thr-12 (H3T11ph) from prophase to early anaphase, by DAPK3 and PKN1. Phosphorylation at Thr-12 (H3T11ph) by PKN1 or isoform M2 of PKM (PKM2) is a specific tag for epigenetic transcriptional activation that promotes demethylation of Lys-10 (H3K9me) by KDM4C/JMJD2C. Phosphorylation at Tyr-42 (H3Y41ph) by JAK2 promotes exclusion of CBX5 (HP1 alpha) from chromatin. Post-translationally, lysine deamination at Lys-5 (H3K4all) to form allysine is mediated by LOXL2. Allysine formation by LOXL2 only takes place on H3K4me3 and results in gene repression. In terms of processing, butyrylation of histones marks active promoters and competes with histone acetylation. It is present during late spermatogenesis. Succinylation at Lys-80 (H3K79succ) by KAT2A takes place with a maximum frequency around the transcription start sites of genes. It gives a specific tag for epigenetic transcription activation. Post-translationally, serine ADP-ribosylation constitutes the primary form of ADP-ribosylation of proteins in response to DNA damage. Serine ADP-ribosylation at Ser-11 (H3S10ADPr) is mutually exclusive with phosphorylation at Ser-11 (H3S10ph) and impairs acetylation at Lys-10 (H3K9ac).

It is found in the nucleus. Its subcellular location is the chromosome. Its function is as follows. Core component of nucleosome. Nucleosomes wrap and compact DNA into chromatin, limiting DNA accessibility to the cellular machineries which require DNA as a template. Histones thereby play a central role in transcription regulation, DNA repair, DNA replication and chromosomal stability. DNA accessibility is regulated via a complex set of post-translational modifications of histones, also called histone code, and nucleosome remodeling. The sequence is that of Histone H3.3C from Bos taurus (Bovine).